A 241-amino-acid chain; its full sequence is Hybrid peroxiredoxin hyPrx5 (241 aa).

In terms of domain architecture, Thioredoxin spans 3 to 167 (SMEGKKVPQV…MLKYLAPQHQ (165 aa)). C49 serves as the catalytic Cysteine sulfenic acid (-SOH) intermediate; for peroxiredoxin activity. A Glutaredoxin domain is found at 170–241 (ESISIFTKPG…GSDDLEKYFA (72 aa)). Residues C180 and C183 are joined by a disulfide bond.

The protein in the N-terminal section; belongs to the peroxiredoxin family. Prx5 subfamily. In the C-terminal section; belongs to the glutaredoxin family. Homotetramer; interconnecting Prx and Grx domains of different monomers.

It catalyses the reaction a hydroperoxide + 2 glutathione = an alcohol + glutathione disulfide + H2O. Functionally, thiol-specific peroxidase that catalyzes the reduction of hydrogen peroxide and organic hydroperoxides to water and alcohols, respectively. Plays a role in cell protection against oxidative stress by detoxifying peroxides. The sequence is that of Hybrid peroxiredoxin hyPrx5 (PGdx) from Haemophilus influenzae (strain ATCC 51907 / DSM 11121 / KW20 / Rd).